A 554-amino-acid chain; its full sequence is MESPNLGDNRVRGESLVPDPPWDRCKEDIAVGLGGVGEDGKDLVISSERSSLLQEPTASTLSSTTATEGHKPVPCGWERVVKQRLSGKTAGKFDVYFISPQGLKFRSKRSLANYLLKNGETFLKPEDFNFTVLPKGSINPGYKHQSLAALTSLQPNETDVSKQNLKTRSKWKTDVLPLPSGTSESPESSGLSNSNSACLLLREHRDIQDVDSEKRRKSKRKVTVLKGTASQKTKQKCRKSLLESTQRNRKRASVVQKVGADRELVPQESQLNRTLCPADACARETVGLAGEEKSPSPGLDLCFIQVTSGTTNKFHSTEAAGEANREQTFLESEEIRSKGDRKGEAHLHTGVLQDGSEMPSCSQAKKHFTSETFQEDSIPRTQVEKRKTSLYFSSKYNKEALSPPRRKSFKKWTPPRSPFNLVQEILFHDPWKLLIATIFLNRTSGKMAIPVLWEFLEKYPSAEVARAADWRDVSELLKPLGLYDLRAKTIIKFSDEYLTKQWRYPIELHGIGKYGNDSYRIFCVNEWKQVHPEDHKLNKYHDWLWENHEKLSLS.

Residues 1–23 (MESPNLGDNRVRGESLVPDPPWD) form a disordered region. One can recognise an MBD domain in the interval 63-135 (STTATEGHKP…EDFNFTVLPK (73 aa)). Over residues 154 to 164 (QPNETDVSKQN) the composition is skewed to polar residues. Disordered regions lie at residues 154 to 195 (QPNE…SNSN) and 209 to 252 (DVDS…RKRA). The segment covering 178–195 (LPSGTSESPESSGLSNSN) has biased composition (low complexity). A phosphoserine mark is found at Ser-296 and Ser-402. Asp-534 is a catalytic residue.

In terms of assembly, interacts with MLH1.

It localises to the nucleus. Mismatch-specific DNA N-glycosylase involved in DNA repair. Has thymine glycosylase activity and is specific for G:T mismatches within methylated and unmethylated CpG sites. Can also remove uracil or 5-fluorouracil in G:U mismatches. Has no lyase activity. Was first identified as methyl-CpG-binding protein. This Mus musculus (Mouse) protein is Methyl-CpG-binding domain protein 4 (Mbd4).